Reading from the N-terminus, the 215-residue chain is Cytidylate kinase (215 aa).

10-18 (GPAASGKGT) lines the ATP pocket.

It belongs to the cytidylate kinase family. Type 1 subfamily.

It is found in the cytoplasm. It catalyses the reaction CMP + ATP = CDP + ADP. The catalysed reaction is dCMP + ATP = dCDP + ADP. The protein is Cytidylate kinase of Bartonella bacilliformis (strain ATCC 35685 / KC583 / Herrer 020/F12,63).